The sequence spans 239 residues: Putative antitoxin VapB45 (239 aa).

Possibly the antitoxin component of a type II toxin-antitoxin (TA) system. Its cognate toxin is VapC45. In Mycobacterium tuberculosis (strain ATCC 25618 / H37Rv), this protein is Putative antitoxin VapB45.